The following is a 168-amino-acid chain: uncharacterized protein (168 aa).

4 consecutive transmembrane segments (helical) span residues 1–21 (MFWLLIAILIVQRAAEMAVAR), 41–61 (PYIITMHILFFLSLIAEVLLM), 68–88 (WWLGIAAVILSVQIVRYWALC), and 123–143 (VILEILLIPLLYQAYVTMCLF).

The protein resides in the cell membrane. This is an uncharacterized protein from Bacillus subtilis (strain 168).